We begin with the raw amino-acid sequence, 227 residues long: tRNA (guanine-N(1)-)-methyltransferase (227 aa).

S-adenosyl-L-methionine is bound by residues glycine 110 and 129 to 134; that span reads IGDYVL.

It belongs to the RNA methyltransferase TrmD family. In terms of assembly, homodimer.

The protein resides in the cytoplasm. The enzyme catalyses guanosine(37) in tRNA + S-adenosyl-L-methionine = N(1)-methylguanosine(37) in tRNA + S-adenosyl-L-homocysteine + H(+). Its function is as follows. Specifically methylates guanosine-37 in various tRNAs. This Mycoplasmopsis synoviae (strain 53) (Mycoplasma synoviae) protein is tRNA (guanine-N(1)-)-methyltransferase.